A 1759-amino-acid chain; its full sequence is Zinc finger protein castor homolog 1 (1759 aa).

Disordered regions lie at residues 1–26 (MDLG…PKRK) and 46–175 (KRAD…SSLR). Basic and acidic residues-rich tracts occupy residues 77–88 (PRSEEDKRRAVI) and 137–160 (EEPS…KEDS). The span at 161–171 (GPSTRQASGEA) shows a compositional bias: polar residues. A Glycyl lysine isopeptide (Lys-Gly) (interchain with G-Cter in SUMO2) cross-link involves residue K288. Positions 374–420 (SKYDVRGIQKPGPAKVPPTPSLAPAPLASVPSAPSAPGPGPEPPASL) are disordered. Residues 387-396 (AKVPPTPSLA) are compositionally biased toward pro residues. The segment covering 397–406 (PAPLASVPSA) has biased composition (low complexity). Residues 407-417 (PSAPGPGPEPP) are compositionally biased toward pro residues. 3 C2H2-type zinc fingers span residues 551–575 (YHCM…ENFH), 610–634 (FHCR…KSYH), and 668–692 (FHCI…KRKH). 4 disordered regions span residues 686 to 723 (TSHK…SSND), 736 to 776 (SSLS…SGLL), 824 to 843 (VSSG…VASG), and 889 to 949 (ATFD…AVPA). Positions 687–698 (SHKRKHERRHIR) are enriched in basic residues. A compositionally biased stretch (low complexity) spans 699 to 712 (SSGALGLPPSLLGA). A phosphoserine mark is found at S720 and S721. Residues 736–764 (SSLSASPTSQQSSASLAAATAATEAGPSA) show a composition bias toward low complexity. The segment covering 925 to 939 (ASQDRSLDLTVKEPS) has biased composition (basic and acidic residues). K975 is covalently cross-linked (Glycyl lysine isopeptide (Lys-Gly) (interchain with G-Cter in SUMO2)). At S981 the chain carries Phosphoserine. Residues 1031 to 1055 (FHCVVEECGALFSTLDGAIKHANFH) form a C2H2-type 4 zinc finger. Positions 1067–1111 (TEAAFPASAAETKPPMAPSSPPVPPVTTATVSSLEGPAPSPASVP) are disordered. The segment covering 1081 to 1091 (PMAPSSPPVPP) has biased composition (pro residues). The C2H2-type 5 zinc finger occupies 1300-1324 (FHCIREGCQFSFLLKHQMTSHARKH). The segment at 1367–1392 (ESSTMDRSCSSTPVGNESTAAGNTIS) is disordered. C2H2-type zinc fingers lie at residues 1457 to 1481 (YHCT…AQHH), 1515 to 1537 (FHCL…RKHH), and 1571 to 1595 (FHCT…KRKH). Disordered stretches follow at residues 1589–1620 (DSHK…DGSL) and 1643–1736 (LGDA…AGAR). Over residues 1655–1673 (AAPGPREGAAAAAAAAGES) the composition is skewed to low complexity. Over residues 1674–1723 (SQEDEEEELELPEEEAEDDEDEDDDEDDDDEDDDEDDDDEDLRTDSEESL) the composition is skewed to acidic residues. The segment covering 1724–1736 (PEAAAEAAGAGAR) has biased composition (low complexity).

Expressed in heart, lung, skeletal muscle, pancreas, testis, small intestine, and stomach, but it is not detectable in the adult brain.

The protein resides in the nucleus. In terms of biological role, transcriptional activator. Involved in vascular assembly and morphogenesis through direct transcriptional regulation of EGFL7. The sequence is that of Zinc finger protein castor homolog 1 (CASZ1) from Homo sapiens (Human).